Here is a 129-residue protein sequence, read N- to C-terminus: Small ribosomal subunit protein uS11c (129 aa).

It belongs to the universal ribosomal protein uS11 family. As to quaternary structure, part of the 30S ribosomal subunit.

It localises to the plastid. The protein resides in the chloroplast. In Oltmannsiellopsis viridis (Marine flagellate), this protein is Small ribosomal subunit protein uS11c.